Reading from the N-terminus, the 134-residue chain is Thionin-2.2 (134 aa).

Residues 1–24 form the signal peptide; sequence MEGKTVISSLLIMSLVLAQIQVEA. 3 cysteine pairs are disulfide-bonded: Cys27-Cys64, Cys28-Cys56, and Cys40-Cys50. Residues 71-134 constitute a propeptide, acidic domain; the sequence is DILENSGDAV…GGSTAAVKSA (64 aa).

This sequence belongs to the plant thionin (TC 1.C.44) family. As to expression, low basal expression in seedlings. Also detected in rosette leaves.

The protein resides in the secreted. Its function is as follows. Thionins are small plant proteins which are toxic to animal cells. They seem to exert their toxic effect at the level of the cell membrane. Their precise function is not known. The sequence is that of Thionin-2.2 (THI2.2) from Arabidopsis thaliana (Mouse-ear cress).